The following is a 232-amino-acid chain: MKVAIIGAMEEEVALLRNQIQNLKTEIHGGFEYYLGQINAIDVILLRSGIGKVNAAIGTALLIKLYEPDYVINTGSAGGFHTDLEVGDIVISQSVCHHDVDVTPFGYARGQVPGHPECYLADIHLIDIAKRSIDALQEVTHMHGLIATGDRFMHLPEDVATTREYFPDMIACEMEAAAVAQTCHAFETPFVIIRSLSDIAGKENAVTFEQYLDKAATHSARLILEMLTHLKS.

E12 functions as the Proton acceptor in the catalytic mechanism. Residues G78, M153, and 174–175 (ME) each bind substrate. D198 functions as the Proton donor in the catalytic mechanism.

The protein belongs to the PNP/UDP phosphorylase family. MtnN subfamily.

It catalyses the reaction S-adenosyl-L-homocysteine + H2O = S-(5-deoxy-D-ribos-5-yl)-L-homocysteine + adenine. It carries out the reaction S-methyl-5'-thioadenosine + H2O = 5-(methylsulfanyl)-D-ribose + adenine. The catalysed reaction is 5'-deoxyadenosine + H2O = 5-deoxy-D-ribose + adenine. It functions in the pathway amino-acid biosynthesis; L-methionine biosynthesis via salvage pathway; S-methyl-5-thio-alpha-D-ribose 1-phosphate from S-methyl-5'-thioadenosine (hydrolase route): step 1/2. Its function is as follows. Catalyzes the irreversible cleavage of the glycosidic bond in both 5'-methylthioadenosine (MTA) and S-adenosylhomocysteine (SAH/AdoHcy) to adenine and the corresponding thioribose, 5'-methylthioribose and S-ribosylhomocysteine, respectively. Also cleaves 5'-deoxyadenosine, a toxic by-product of radical S-adenosylmethionine (SAM) enzymes, into 5-deoxyribose and adenine. In Hydrogenovibrio crunogenus (strain DSM 25203 / XCL-2) (Thiomicrospira crunogena), this protein is 5'-methylthioadenosine/S-adenosylhomocysteine nucleosidase.